A 339-amino-acid chain; its full sequence is UDP-3-O-acylglucosamine N-acyltransferase (339 aa).

The Proton acceptor role is filled by His239.

This sequence belongs to the transferase hexapeptide repeat family. LpxD subfamily. As to quaternary structure, homotrimer.

The catalysed reaction is a UDP-3-O-[(3R)-3-hydroxyacyl]-alpha-D-glucosamine + a (3R)-hydroxyacyl-[ACP] = a UDP-2-N,3-O-bis[(3R)-3-hydroxyacyl]-alpha-D-glucosamine + holo-[ACP] + H(+). It functions in the pathway bacterial outer membrane biogenesis; LPS lipid A biosynthesis. Functionally, catalyzes the N-acylation of UDP-3-O-acylglucosamine using 3-hydroxyacyl-ACP as the acyl donor. Is involved in the biosynthesis of lipid A, a phosphorylated glycolipid that anchors the lipopolysaccharide to the outer membrane of the cell. The polypeptide is UDP-3-O-acylglucosamine N-acyltransferase (Aliivibrio fischeri (strain ATCC 700601 / ES114) (Vibrio fischeri)).